We begin with the raw amino-acid sequence, 238 residues long: Pyridoxine 5'-phosphate synthase (238 aa).

3-amino-2-oxopropyl phosphate contacts are provided by Asn-7 and Arg-18. Residue His-43 is the Proton acceptor of the active site. 1-deoxy-D-xylulose 5-phosphate is bound by residues Arg-45 and His-50. Glu-70 acts as the Proton acceptor in catalysis. Thr-100 lines the 1-deoxy-D-xylulose 5-phosphate pocket. His-190 serves as the catalytic Proton donor. 3-amino-2-oxopropyl phosphate is bound by residues Asp-191 and 213–214 (GH).

The protein belongs to the PNP synthase family. Homooctamer; tetramer of dimers.

It localises to the cytoplasm. The catalysed reaction is 3-amino-2-oxopropyl phosphate + 1-deoxy-D-xylulose 5-phosphate = pyridoxine 5'-phosphate + phosphate + 2 H2O + H(+). The protein operates within cofactor biosynthesis; pyridoxine 5'-phosphate biosynthesis; pyridoxine 5'-phosphate from D-erythrose 4-phosphate: step 5/5. Functionally, catalyzes the complicated ring closure reaction between the two acyclic compounds 1-deoxy-D-xylulose-5-phosphate (DXP) and 3-amino-2-oxopropyl phosphate (1-amino-acetone-3-phosphate or AAP) to form pyridoxine 5'-phosphate (PNP) and inorganic phosphate. The protein is Pyridoxine 5'-phosphate synthase of Porphyromonas gingivalis (strain ATCC 33277 / DSM 20709 / CIP 103683 / JCM 12257 / NCTC 11834 / 2561).